The following is a 407-amino-acid chain: Na(+)-translocating NADH-quinone reductase subunit F (407 aa).

Residues 3–23 form a helical membrane-spanning segment; that stretch reads IILGVVMFTLIVLALVLVILF. The 95-residue stretch at 32-126 folds into the 2Fe-2S ferredoxin-type domain; the sequence is GDITISINGD…DMDIELPEEI (95 aa). The [2Fe-2S] cluster site is built by Cys-69, Cys-75, Cys-78, and Cys-110. The FAD-binding FR-type domain occupies 129-269; it reads VKKWECTVIS…SGPFGEFFAK (141 aa). A catalytic region spans residues 272-389; the sequence is DAEMVFIGGG…PMMNAAVIGM (118 aa).

It belongs to the NqrF family. As to quaternary structure, composed of six subunits; NqrA, NqrB, NqrC, NqrD, NqrE and NqrF. [2Fe-2S] cluster serves as cofactor. Requires FAD as cofactor.

The protein resides in the cell inner membrane. It carries out the reaction a ubiquinone + n Na(+)(in) + NADH + H(+) = a ubiquinol + n Na(+)(out) + NAD(+). Its function is as follows. NQR complex catalyzes the reduction of ubiquinone-1 to ubiquinol by two successive reactions, coupled with the transport of Na(+) ions from the cytoplasm to the periplasm. The first step is catalyzed by NqrF, which accepts electrons from NADH and reduces ubiquinone-1 to ubisemiquinone by a one-electron transfer pathway. The sequence is that of Na(+)-translocating NADH-quinone reductase subunit F from Vibrio vulnificus (strain CMCP6).